Reading from the N-terminus, the 442-residue chain is Probable serine/threonine-protein kinase kinase DDB_G0280643 (442 aa).

One can recognise a Protein kinase domain in the interval 74–398 (IDPNTIVDCG…VNEILESPYF (325 aa)). ATP is bound by residues 80-88 (VDCGTNGIM) and lysine 103. Aspartate 231 (proton acceptor) is an active-site residue.

Belongs to the protein kinase superfamily. CMGC Ser/Thr protein kinase family. MAP kinase subfamily.

The catalysed reaction is L-seryl-[protein] + ATP = O-phospho-L-seryl-[protein] + ADP + H(+). The enzyme catalyses L-threonyl-[protein] + ATP = O-phospho-L-threonyl-[protein] + ADP + H(+). This chain is Probable serine/threonine-protein kinase kinase DDB_G0280643, found in Dictyostelium discoideum (Social amoeba).